Here is a 166-residue protein sequence, read N- to C-terminus: Myosin regulatory light chain 2, ventricular/cardiac muscle isoform (166 aa).

S2 is subject to N,N,N-trimethylserine. The residue at position 14 (N14) is a Deamidated asparagine. A Phosphoserine modification is found at S19. EF-hand domains follow at residues 24 to 59, 94 to 129, and 130 to 165; these read TQIQ…LGRV, DPEE…QAER, and FSKE…GEEK. Ca(2+)-binding residues include D37, N39, D41, and D48. T52 carries the phosphothreonine modification.

In terms of assembly, myosin is a hexamer of 2 heavy chains and 4 light chains. Interacts with MYOC. In terms of processing, N-terminus is methylated by METTL11A/NTM1. Post-translationally, phosphorylated by MYLK3 and MYLK2; promotes cardiac muscle contraction and function. Dephosphorylated by PPP1CB complexed to PPP1R12B. The phosphorylated form in adult is expressed as gradients across the heart from endocardium (low phosphorylation) to epicardium (high phosphorylation); regulates cardiac torsion and workload distribution.

It localises to the cytoplasm. The protein resides in the myofibril. Its subcellular location is the sarcomere. It is found in the a band. Contractile protein that plays a role in heart development and function. Following phosphorylation, plays a role in cross-bridge cycling kinetics and cardiac muscle contraction by increasing myosin lever arm stiffness and promoting myosin head diffusion; as a consequence of the increase in maximum contraction force and calcium sensitivity of contraction force. These events altogether slow down myosin kinetics and prolong duty cycle resulting in accumulated myosins being cooperatively recruited to actin binding sites to sustain thin filament activation as a means to fine-tune myofilament calcium sensitivity to force. During cardiogenesis plays an early role in cardiac contractility by promoting cardiac myofibril assembly. The chain is Myosin regulatory light chain 2, ventricular/cardiac muscle isoform from Bos taurus (Bovine).